The chain runs to 137 residues: Phosphoribosyl-AMP cyclohydrolase (137 aa).

Aspartate 84 is a Mg(2+) binding site. Cysteine 85 is a Zn(2+) binding site. Mg(2+)-binding residues include aspartate 86 and aspartate 88. Positions 101 and 108 each coordinate Zn(2+).

Belongs to the PRA-CH family. Homodimer. Mg(2+) serves as cofactor. It depends on Zn(2+) as a cofactor.

Its subcellular location is the cytoplasm. It carries out the reaction 1-(5-phospho-beta-D-ribosyl)-5'-AMP + H2O = 1-(5-phospho-beta-D-ribosyl)-5-[(5-phospho-beta-D-ribosylamino)methylideneamino]imidazole-4-carboxamide. Its pathway is amino-acid biosynthesis; L-histidine biosynthesis; L-histidine from 5-phospho-alpha-D-ribose 1-diphosphate: step 3/9. Its function is as follows. Catalyzes the hydrolysis of the adenine ring of phosphoribosyl-AMP. The polypeptide is Phosphoribosyl-AMP cyclohydrolase (Chlorobaculum parvum (strain DSM 263 / NCIMB 8327) (Chlorobium vibrioforme subsp. thiosulfatophilum)).